The chain runs to 250 residues: Ubiquinone/menaquinone biosynthesis C-methyltransferase UbiE (250 aa).

S-adenosyl-L-methionine contacts are provided by residues Ser-73, Asp-94, and 122–123 (NA).

The protein belongs to the class I-like SAM-binding methyltransferase superfamily. MenG/UbiE family.

The enzyme catalyses a 2-demethylmenaquinol + S-adenosyl-L-methionine = a menaquinol + S-adenosyl-L-homocysteine + H(+). It carries out the reaction a 2-methoxy-6-(all-trans-polyprenyl)benzene-1,4-diol + S-adenosyl-L-methionine = a 5-methoxy-2-methyl-3-(all-trans-polyprenyl)benzene-1,4-diol + S-adenosyl-L-homocysteine + H(+). It participates in quinol/quinone metabolism; menaquinone biosynthesis; menaquinol from 1,4-dihydroxy-2-naphthoate: step 2/2. The protein operates within cofactor biosynthesis; ubiquinone biosynthesis. Its function is as follows. Methyltransferase required for the conversion of demethylmenaquinol (DMKH2) to menaquinol (MKH2) and the conversion of 2-polyprenyl-6-methoxy-1,4-benzoquinol (DDMQH2) to 2-polyprenyl-3-methyl-6-methoxy-1,4-benzoquinol (DMQH2). The protein is Ubiquinone/menaquinone biosynthesis C-methyltransferase UbiE of Legionella pneumophila (strain Paris).